A 416-amino-acid chain; its full sequence is MRYLFSSESVTEGHPDKICDQIADAILDALLTQDPQSRVAAEVVVNTGLVLITGEITTKAQVNYVNLARQKIHEIGYTDANNGFAANSCAVLVALDEQSPDIARGVDTAQEAREQLSDAELDRIGAGDQGIMFGYACNETPEYMPLPISLAHRMARRLAAVRKTGQLPYLRPDGKTQVTVIYEDGKPVGIDTILISTQHTATIDDISEESAVQAKIKADLWEAVVKPVFADLTLQPDGNTRFLVNPTGKFVIGGPQGDSGLTGRKLVVDTYGGYARHGGGAFSGKDPTKVDRSAAYMARYIAKNIVAAGLADKCELQISYAIGVARPMSLFVDTFGTGKLSPEQLLELIKTHFDLRPAAIIQTLNLRHLPQERGGRFYQDVAAYGHFGRHDLDLPWEKLDKVADLQAAAAQFLSAV.

Residue H14 coordinates ATP. D16 lines the Mg(2+) pocket. E42 provides a ligand contact to K(+). L-methionine is bound by residues E55 and Q98. A flexible loop region spans residues 98–108; sequence QSPDIARGVDT. ATP is bound by residues 173-175, 249-250, D258, 264-265, A281, and K285; these read DGK, KF, and RK. D258 is an L-methionine binding site. An L-methionine-binding site is contributed by K289.

This sequence belongs to the AdoMet synthase family. Homotetramer; dimer of dimers. The cofactor is Mg(2+). It depends on K(+) as a cofactor.

The protein resides in the cytoplasm. The enzyme catalyses L-methionine + ATP + H2O = S-adenosyl-L-methionine + phosphate + diphosphate. The protein operates within amino-acid biosynthesis; S-adenosyl-L-methionine biosynthesis; S-adenosyl-L-methionine from L-methionine: step 1/1. Functionally, catalyzes the formation of S-adenosylmethionine (AdoMet) from methionine and ATP. The overall synthetic reaction is composed of two sequential steps, AdoMet formation and the subsequent tripolyphosphate hydrolysis which occurs prior to release of AdoMet from the enzyme. This is S-adenosylmethionine synthase from Thermosynechococcus vestitus (strain NIES-2133 / IAM M-273 / BP-1).